The sequence spans 438 residues: Putative hydrolase MSMEG_3995/MSMEI_3903 (438 aa).

4 residues coordinate Zn(2+): Asp-95, Asp-104, Glu-143, and His-208. Lys-217 is covalently cross-linked (Isoglutamyl lysine isopeptide (Lys-Gln) (interchain with Q-Cter in protein Pup)). Zn(2+) is bound at residue His-400.

This sequence belongs to the peptidase M20 family. Requires Zn(2+) as cofactor.

This chain is Putative hydrolase MSMEG_3995/MSMEI_3903, found in Mycolicibacterium smegmatis (strain ATCC 700084 / mc(2)155) (Mycobacterium smegmatis).